Reading from the N-terminus, the 459-residue chain is Argininosuccinate lyase (459 aa).

The protein belongs to the lyase 1 family. Argininosuccinate lyase subfamily.

It localises to the cytoplasm. It carries out the reaction 2-(N(omega)-L-arginino)succinate = fumarate + L-arginine. Its pathway is amino-acid biosynthesis; L-arginine biosynthesis; L-arginine from L-ornithine and carbamoyl phosphate: step 3/3. This chain is Argininosuccinate lyase, found in Chromobacterium violaceum (strain ATCC 12472 / DSM 30191 / JCM 1249 / CCUG 213 / NBRC 12614 / NCIMB 9131 / NCTC 9757 / MK).